The following is a 213-amino-acid chain: Large ribosomal subunit protein uL3 (213 aa).

N5-methylglutamine is present on Q151.

Belongs to the universal ribosomal protein uL3 family. In terms of assembly, part of the 50S ribosomal subunit. Forms a cluster with proteins L14 and L19. Methylated by PrmB.

One of the primary rRNA binding proteins, it binds directly near the 3'-end of the 23S rRNA, where it nucleates assembly of the 50S subunit. In Rhizobium johnstonii (strain DSM 114642 / LMG 32736 / 3841) (Rhizobium leguminosarum bv. viciae), this protein is Large ribosomal subunit protein uL3.